The sequence spans 448 residues: Tumor necrosis factor receptor superfamily member EDAR (448 aa).

The N-terminal stretch at 1–26 (MAHVGDCTQTPWLPVLVVSLMCSARA) is a signal peptide. The Extracellular portion of the chain corresponds to 27–187 (EYSNCGENEY…LSGQGHLATA (161 aa)). TNFR-Cys repeat units follow at residues 30–71 (NCGE…DYGC), 73–113 (PCPA…DAEC), and 115–148 (PCLPGYYMLENRPRNIYGMVCYSCLLAPPNTKEC). Intrachain disulfides connect C31-C44, C47-C60, C50-C71, C74-C87, C93-C113, and C135-C148. N-linked (GlcNAc...) asparagine glycosylation is present at N38. Residues 188-208 (LIIAMSTIFIMAIAIVLIIMF) traverse the membrane as a helical segment. The Cytoplasmic segment spans residues 209 to 448 (YILKTKPSAP…PPASQPHAAS (240 aa)). The tract at residues 220-297 (CCTSHPGKSV…EEPAPDKQGS (78 aa)) is disordered. Residues 233–243 (VSKDEEKKEAP) are compositionally biased toward basic and acidic residues. Residues 271–283 (DASSENEQLLSRS) show a composition bias toward polar residues. Positions 358–431 (RMLSSTYNSE…DAVESLCADI (74 aa)) constitute a Death domain.

In terms of assembly, binds to EDARADD. Associates with TRAF1, TRAF2, TRAF3 and NIK. Detected in fetal kidney, lung, skin and cultured neonatal epidermal keratinocytes. Not detected in lymphoblast and fibroblast cell lines.

The protein resides in the membrane. Receptor for EDA isoform A1, but not for EDA isoform A2. Mediates the activation of NF-kappa-B and JNK. May promote caspase-independent cell death. The polypeptide is Tumor necrosis factor receptor superfamily member EDAR (EDAR) (Homo sapiens (Human)).